A 103-amino-acid polypeptide reads, in one-letter code: Co-chaperonin GroES (103 aa).

Belongs to the GroES chaperonin family. Heptamer of 7 subunits arranged in a ring. Interacts with the chaperonin GroEL.

It localises to the cytoplasm. Functionally, together with the chaperonin GroEL, plays an essential role in assisting protein folding. The GroEL-GroES system forms a nano-cage that allows encapsulation of the non-native substrate proteins and provides a physical environment optimized to promote and accelerate protein folding. GroES binds to the apical surface of the GroEL ring, thereby capping the opening of the GroEL channel. This is Co-chaperonin GroES from Nostoc sp. (strain PCC 7120 / SAG 25.82 / UTEX 2576).